A 201-amino-acid chain; its full sequence is Probable molybdenum cofactor guanylyltransferase (201 aa).

GTP-binding positions include leucine 16 to glycine 18, lysine 28, aspartate 75, and aspartate 107. Aspartate 107 provides a ligand contact to Mg(2+).

Belongs to the MobA family. Requires Mg(2+) as cofactor.

It localises to the cytoplasm. The enzyme catalyses Mo-molybdopterin + GTP + H(+) = Mo-molybdopterin guanine dinucleotide + diphosphate. Functionally, transfers a GMP moiety from GTP to Mo-molybdopterin (Mo-MPT) cofactor (Moco or molybdenum cofactor) to form Mo-molybdopterin guanine dinucleotide (Mo-MGD) cofactor. This chain is Probable molybdenum cofactor guanylyltransferase, found in Mycobacterium ulcerans (strain Agy99).